Here is a 319-residue protein sequence, read N- to C-terminus: Transaldolase (319 aa).

K131 functions as the Schiff-base intermediate with substrate in the catalytic mechanism.

The protein belongs to the transaldolase family. Type 1 subfamily. As to quaternary structure, homodimer.

It localises to the cytoplasm. The enzyme catalyses D-sedoheptulose 7-phosphate + D-glyceraldehyde 3-phosphate = D-erythrose 4-phosphate + beta-D-fructose 6-phosphate. It participates in carbohydrate degradation; pentose phosphate pathway; D-glyceraldehyde 3-phosphate and beta-D-fructose 6-phosphate from D-ribose 5-phosphate and D-xylulose 5-phosphate (non-oxidative stage): step 2/3. Functionally, transaldolase is important for the balance of metabolites in the pentose-phosphate pathway. The sequence is that of Transaldolase from Wigglesworthia glossinidia brevipalpis.